Consider the following 89-residue polypeptide: Small ribosomal subunit protein uS15 (89 aa).

The protein belongs to the universal ribosomal protein uS15 family. Part of the 30S ribosomal subunit. Forms a bridge to the 50S subunit in the 70S ribosome, contacting the 23S rRNA.

Its function is as follows. One of the primary rRNA binding proteins, it binds directly to 16S rRNA where it helps nucleate assembly of the platform of the 30S subunit by binding and bridging several RNA helices of the 16S rRNA. In terms of biological role, forms an intersubunit bridge (bridge B4) with the 23S rRNA of the 50S subunit in the ribosome. This Cellvibrio japonicus (strain Ueda107) (Pseudomonas fluorescens subsp. cellulosa) protein is Small ribosomal subunit protein uS15.